The chain runs to 680 residues: MIDRYKHQQLRIGLVSPQQITAWANKILPNGEMVGEVTKPYTFHYKSNKPEKDGLFCERIFGPIKSGICACGNYRVIGDEKEDPKFCEQCGVESVDSRIRRYQMGYIKLACPVTHVWYLKRLPSYIANLSDRPLKELEGLVYCDFSFARPIAKKPTFLRLRGSFEYEIQSRKYSIPLFFTTQCFNLFRNREISTGAGAIREQLADPDLRIITDRSLVEWKELGEERSAENEWEDKKIVRRKDFLVRRMELAKHLLRTNVEPERMVLCLLPVLPPELRPIIQIDGGKPMSSDINELYRRVIYRNNTLIDPLTTSRSTPGESVMCQEKLVQEAVDTLLDNGIRGQPMRDGHNKVYKSFSDVIEGKEGRFRETLLGKRVDYSGRSVIVVGPSLSLHRCGLPREIAIELFQTFVIRGLIRQHVASNIGIAKSKIREKEPIVWEILQKVMEGHPVLLNRAPTLHRLGIQAFQPILVEGRAICLHPLVRKGFNADFDGDQMAVHVPLSLEAQAEARLLMFSHMNLLSPAIGDPISVPTQDMLIGLYVLTIGNRRGICTNRYNPCNYRNYQNEIVDDNNYKYTKEKEPYFCSSYDALGAYRQKRIDLYSPLWLRWRLDQCVIASINREVPIEVQYESLGIYHEIHEHYRIVKSVKKEIVCIYIRTTVGHISFYREIEEAIQGFCRTY.

Residues cysteine 69, cysteine 71, cysteine 87, and cysteine 90 each coordinate Zn(2+). Mg(2+)-binding residues include aspartate 489, aspartate 491, and aspartate 493.

The protein belongs to the RNA polymerase beta' chain family. RpoC1 subfamily. In terms of assembly, in plastids the minimal PEP RNA polymerase catalytic core is composed of four subunits: alpha, beta, beta', and beta''. When a (nuclear-encoded) sigma factor is associated with the core the holoenzyme is formed, which can initiate transcription. Mg(2+) is required as a cofactor. The cofactor is Zn(2+).

It localises to the plastid. It is found in the chloroplast. It carries out the reaction RNA(n) + a ribonucleoside 5'-triphosphate = RNA(n+1) + diphosphate. In terms of biological role, DNA-dependent RNA polymerase catalyzes the transcription of DNA into RNA using the four ribonucleoside triphosphates as substrates. The polypeptide is DNA-directed RNA polymerase subunit beta' (Amborella trichopoda).